Here is a 598-residue protein sequence, read N- to C-terminus: Major royal jelly protein 5 (598 aa).

The first 17 residues, Met-1–Gly-17, serve as a signal peptide directing secretion. Residues Asn-148, Asn-164, Asn-181, and Asn-324 are each glycosylated (N-linked (GlcNAc...) asparagine).

The protein belongs to the major royal jelly protein family. In terms of tissue distribution, found in and secreted from the hypopharyngeal glands of the worker honey bee (at protein level); expression peaks at 8 days post eclosion. Expressed in the brains of adult worker bees peaking at 12 days post eclosion (at protein level). Expressed in the spermatheca of adult queen bees (at protein level); Expression levels are higher in mated queens than in virgin queens. Expressed in the heads of worker bees after eclosion, expression dropping with age and detectable up to 26 days of age.

The protein resides in the secreted. Functionally, component of royal jelly, a substance produced in the hypopharyngeal gland containing proteins, free amino acids, fatty acids, sugars and other nutrients, which is fed to developing larvae by worker nurse bees. Major royal jelly proteins (MRJPs) are high in essential amino acids and probably have a nutritional function in larval food. All larvae are fed some royal jelly (also known as worker jelly) early in their development but it forms the principal source of nutrition for larvae destined to become queen bees. Produced in the spermatheca of adult queen bees, along with other major royal jelly proteins, where it may act as a nutrient supply for sperm stored by mated queens, or be involved in energy metabolism. In Apis mellifera (Honeybee), this protein is Major royal jelly protein 5.